A 357-amino-acid polypeptide reads, in one-letter code: 5-hydroxytryptamine receptor 5A (357 aa).

The Extracellular segment spans residues 1–36 (MDLPINLTSFSLSTPSTLEPNRSLDTEALRTSQSFL). N-linked (GlcNAc...) asparagine glycosylation is found at N6 and N21. Residues 37-63 (SAFRVLVLTLLGFLAAATFTWNLLVLA) traverse the membrane as a helical segment. At 64–76 (TILRVRTFHRVPH) the chain is on the cytoplasmic side. The helical transmembrane segment at 77–103 (NLVASMAISDVLVAVLVMPLSLVHELS) threads the bilayer. Residues 104–114 (GRRWQLGRRLC) lie on the Extracellular side of the membrane. C114 and C192 are joined by a disulfide. The helical transmembrane segment at 115-137 (QLWIACDVLCCTASIWNVTAIAL) threads the bilayer. D121 lines the serotonin pocket. At 138–155 (DRYWSITRHLEYTLRARK) the chain is on the cytoplasmic side. A helical membrane pass occupies residues 156–176 (RVSNVMILLTWALSAVISLAP). The Extracellular segment spans residues 177–198 (LLFGWGETYSELSEECQVSREP). A helical membrane pass occupies residues 199 to 220 (SYTVFSTVGAFYLPLCVVLFVY). At 221–287 (WKIYKAAKFR…QKEQRAALMV (67 aa)) the chain is on the cytoplasmic side. A helical membrane pass occupies residues 288-312 (GILIGVFVLCWFPFFVTELISPLCS). Residues 313 to 314 (WD) are Extracellular-facing. The helical transmembrane segment at 315–339 (IPALWKSIFLWLGYSNSFFNPLIYT) threads the bilayer. The Cytoplasmic segment spans residues 340-357 (AFNRSYSSAFKVFFSKQQ).

Belongs to the G-protein coupled receptor 1 family. In terms of tissue distribution, central nervous system.

It localises to the cell membrane. G-protein coupled receptor for 5-hydroxytryptamine (serotonin), a biogenic hormone that functions as a neurotransmitter, a hormone and a mitogen. Also functions as a receptor for ergot alkaloid derivatives and other psychoactive substances. Ligand binding causes a conformation change that triggers signaling via guanine nucleotide-binding proteins (G proteins) and modulates the activity of downstream effectors. Htr5a is coupled to G(i)/G(o) G alpha proteins and mediates inhibitory neurotransmission: signaling inhibits adenylate cyclase activity and activates a phosphatidylinositol-calcium second messenger system that regulates the release of Ca(2+) ions from intracellular stores. This Rattus norvegicus (Rat) protein is 5-hydroxytryptamine receptor 5A.